The following is a 199-amino-acid chain: Holliday junction branch migration complex subunit RuvA (199 aa).

Residues 1–64 (MIALLTGRLA…EDSISLFGFR (64 aa)) are domain I. A domain II region spans residues 65-143 (TLAEKEFFQL…KMDVAPSAQE (79 aa)). The segment at 144-154 (APSSEAPAEVA) is flexible linker. Positions 154-199 (ADDVASALVNLGYKEAVVRKVLAEMSIEPDASTEAVLRQALKVLMK) are domain III.

The protein belongs to the RuvA family. In terms of assembly, homotetramer. Forms an RuvA(8)-RuvB(12)-Holliday junction (HJ) complex. HJ DNA is sandwiched between 2 RuvA tetramers; dsDNA enters through RuvA and exits via RuvB. An RuvB hexamer assembles on each DNA strand where it exits the tetramer. Each RuvB hexamer is contacted by two RuvA subunits (via domain III) on 2 adjacent RuvB subunits; this complex drives branch migration. In the full resolvosome a probable DNA-RuvA(4)-RuvB(12)-RuvC(2) complex forms which resolves the HJ.

Its subcellular location is the cytoplasm. Functionally, the RuvA-RuvB-RuvC complex processes Holliday junction (HJ) DNA during genetic recombination and DNA repair, while the RuvA-RuvB complex plays an important role in the rescue of blocked DNA replication forks via replication fork reversal (RFR). RuvA specifically binds to HJ cruciform DNA, conferring on it an open structure. The RuvB hexamer acts as an ATP-dependent pump, pulling dsDNA into and through the RuvAB complex. HJ branch migration allows RuvC to scan DNA until it finds its consensus sequence, where it cleaves and resolves the cruciform DNA. In Geobacter sulfurreducens (strain ATCC 51573 / DSM 12127 / PCA), this protein is Holliday junction branch migration complex subunit RuvA.